Here is a 433-residue protein sequence, read N- to C-terminus: Trigger factor (433 aa).

Residues 166 to 251 (GDFAVIDFEG…LHEIQERAKP (86 aa)) form the PPIase FKBP-type domain.

Belongs to the FKBP-type PPIase family. Tig subfamily.

It is found in the cytoplasm. It catalyses the reaction [protein]-peptidylproline (omega=180) = [protein]-peptidylproline (omega=0). In terms of biological role, involved in protein export. Acts as a chaperone by maintaining the newly synthesized protein in an open conformation. Functions as a peptidyl-prolyl cis-trans isomerase. The protein is Trigger factor of Aliarcobacter butzleri (strain RM4018) (Arcobacter butzleri).